Here is a 472-residue protein sequence, read N- to C-terminus: Carboxypeptidase Q (472 aa).

The N-terminal stretch at 1-20 (MKFLIFAFFGGVHLLSLCSG) is a signal peptide. The propeptide occupies 21–44 (KAICKNGISKRTFEEIKEEIASCG). 2 N-linked (GlcNAc...) asparagine glycosylation sites follow: Asn61 and Asn179. Zn(2+)-binding residues include His290 and Asp302. The active-site Nucleophile is Glu336. Residue Glu337 coordinates Zn(2+). Residues Asn353 and Asn356 are each glycosylated (N-linked (GlcNAc...) asparagine). Asp364 is a Zn(2+) binding site. Asn396 carries N-linked (GlcNAc...) asparagine glycosylation. Position 434 (His434) interacts with Zn(2+).

It belongs to the peptidase M28 family. As to quaternary structure, homodimer. The monomeric form is inactive while the homodimer is active. In terms of processing, N-glycosylated. The secreted form is modified by hybrid or complex type oligosaccharide chains. As to expression, mainly detected in blood plasma. Abundant in placenta and kidney. Present at low level in muscles, liver and skin fibroblasts. Not detected in brain or white blood cells (at protein level).

The protein resides in the endoplasmic reticulum. The protein localises to the golgi apparatus. It localises to the lysosome. Its subcellular location is the secreted. Its function is as follows. Carboxypeptidase that may play an important role in the hydrolysis of circulating peptides. Catalyzes the hydrolysis of dipeptides with unsubstituted terminals into amino acids. May play a role in the liberation of thyroxine hormone from its thyroglobulin (Tg) precursor. The polypeptide is Carboxypeptidase Q (CPQ) (Homo sapiens (Human)).